We begin with the raw amino-acid sequence, 677 residues long: Zinc finger and BTB domain-containing protein 5 (677 aa).

One can recognise a BTB domain in the interval 24 to 93 (CDCVIVVGNR…MYTSTLMLGE (70 aa)). Positions 158 to 181 (LNSSQNGEEQPAPMSSSMRSNLDQ) are enriched in polar residues. Disordered stretches follow at residues 158-252 (LNSS…MTDN) and 287-312 (SMASRATQVETSFDQEAAPEKSSFQC). Residue Ser234 is modified to Phosphoserine. Residue Lys239 forms a Glycyl lysine isopeptide (Lys-Gly) (interchain with G-Cter in SUMO2) linkage. Polar residues predominate over residues 287–300 (SMASRATQVETSFD). Glycyl lysine isopeptide (Lys-Gly) (interchain with G-Cter in SUMO2) cross-links involve residues Lys322 and Lys330. The disordered stretch occupies residues 331-387 (SEPLSSPEPQDEVSDVTSQAEGSESVEVEGVVVSAEKIDLSPESSDRSFSDPQSSTD). The segment covering 350–365 (AEGSESVEVEGVVVSA) has biased composition (low complexity). A compositionally biased stretch (basic and acidic residues) spans 366-379 (EKIDLSPESSDRSF). Phosphoserine is present on Ser371. Residues Lys404 and Lys415 each participate in a glycyl lysine isopeptide (Lys-Gly) (interchain with G-Cter in SUMO2) cross-link. The disordered stretch occupies residues 447 to 474 (LLSPEAGPAGGPSSAPGSHVENPFSEPA). Positions 449–464 (SPEAGPAGGPSSAPGS) are enriched in low complexity. Lys541 participates in a covalent cross-link: Glycyl lysine isopeptide (Lys-Gly) (interchain with G-Cter in SUMO2). Residues 552-576 (QIPENSTSSQLMMNGATSSFENGHP) show a composition bias toward polar residues. Residues 552 to 585 (QIPENSTSSQLMMNGATSSFENGHPSQPGPPQLT) form a disordered region. Residues Lys594 and Lys597 each participate in a glycyl lysine isopeptide (Lys-Gly) (interchain with G-Cter in SUMO2) cross-link. The segment at 613–635 (YACKICCKTFLTLTDCKKHIRVH) adopts a C2H2-type 1 zinc-finger fold. The C2H2-type 2; atypical zinc finger occupies 641–664 (YACLKCGKRFSQSSHLYKHSKTTC). Residues Lys645 and Lys658 each participate in a glycyl lysine isopeptide (Lys-Gly) (interchain with G-Cter in SUMO2) cross-link.

It is found in the nucleus. In terms of biological role, may be involved in transcriptional regulation. The polypeptide is Zinc finger and BTB domain-containing protein 5 (ZBTB5) (Homo sapiens (Human)).